Reading from the N-terminus, the 283-residue chain is Nucleotide-binding protein THEYE_A0235 (283 aa).

12 to 19 (GLSGGGKT) is an ATP binding site. GTP is bound at residue 62 to 65 (DIRV).

Belongs to the RapZ-like family.

Its function is as follows. Displays ATPase and GTPase activities. The protein is Nucleotide-binding protein THEYE_A0235 of Thermodesulfovibrio yellowstonii (strain ATCC 51303 / DSM 11347 / YP87).